The following is a 346-amino-acid chain: NADH-ubiquinone oxidoreductase chain 2 (346 aa).

The next 11 membrane-spanning stretches (helical) occupy residues M1–I21, H25–S45, F60–A80, C95–F115, L124–M144, L149–G169, I178–V195, L200–L219, A242–P262, E274–L294, and A326–V346.

It belongs to the complex I subunit 2 family.

The protein resides in the mitochondrion inner membrane. It catalyses the reaction a ubiquinone + NADH + 5 H(+)(in) = a ubiquinol + NAD(+) + 4 H(+)(out). Functionally, core subunit of the mitochondrial membrane respiratory chain NADH dehydrogenase (Complex I) that is believed to belong to the minimal assembly required for catalysis. Complex I functions in the transfer of electrons from NADH to the respiratory chain. The immediate electron acceptor for the enzyme is believed to be ubiquinone. This Mareca americana (American wigeon) protein is NADH-ubiquinone oxidoreductase chain 2 (MT-ND2).